We begin with the raw amino-acid sequence, 427 residues long: Glutamyl-tRNA(Gln) amidotransferase subunit D (427 aa).

The span at 1–18 (MTADPGDRVRVTHGDASH) shows a compositional bias: basic and acidic residues. The interval 1–20 (MTADPGDRVRVTHGDASHEG) is disordered. In terms of domain architecture, Asparaginase/glutaminase spans 80 to 413 (PTIALISTGG…DDPEAAMQES (334 aa)). Active-site residues include T90, T166, D167, and K243.

It belongs to the asparaginase 1 family. GatD subfamily. As to quaternary structure, heterodimer of GatD and GatE.

The catalysed reaction is L-glutamyl-tRNA(Gln) + L-glutamine + ATP + H2O = L-glutaminyl-tRNA(Gln) + L-glutamate + ADP + phosphate + H(+). Functionally, allows the formation of correctly charged Gln-tRNA(Gln) through the transamidation of misacylated Glu-tRNA(Gln) in organisms which lack glutaminyl-tRNA synthetase. The reaction takes place in the presence of glutamine and ATP through an activated gamma-phospho-Glu-tRNA(Gln). The GatDE system is specific for glutamate and does not act on aspartate. This chain is Glutamyl-tRNA(Gln) amidotransferase subunit D, found in Halobacterium salinarum (strain ATCC 29341 / DSM 671 / R1).